We begin with the raw amino-acid sequence, 251 residues long: ATP synthase subunit a 2 (251 aa).

The next 5 membrane-spanning stretches (helical) occupy residues 35–55 (GQVF…SLLA), 94–114 (LPFI…GSLI), 133–153 (INTT…AGLS), 198–218 (LVVA…LMAL), and 219–239 (GLFT…AYIH).

It belongs to the ATPase A chain family. In terms of assembly, F-type ATPases have 2 components, CF(1) - the catalytic core - and CF(0) - the membrane proton channel. CF(1) has five subunits: alpha(3), beta(3), gamma(1), delta(1), epsilon(1). CF(0) has four main subunits: a, b, b' and c.

Its subcellular location is the cellular thylakoid membrane. Key component of the proton channel; it plays a direct role in the translocation of protons across the membrane. The protein is ATP synthase subunit a 2 of Crocosphaera subtropica (strain ATCC 51142 / BH68) (Cyanothece sp. (strain ATCC 51142)).